The following is a 165-amino-acid chain: Endoribonuclease YbeY (165 aa).

The Zn(2+) site is built by H130, H134, and H140.

This sequence belongs to the endoribonuclease YbeY family. Zn(2+) serves as cofactor.

The protein resides in the cytoplasm. Single strand-specific metallo-endoribonuclease involved in late-stage 70S ribosome quality control and in maturation of the 3' terminus of the 16S rRNA. This is Endoribonuclease YbeY from Streptococcus gordonii (strain Challis / ATCC 35105 / BCRC 15272 / CH1 / DL1 / V288).